Consider the following 215-residue polypeptide: Thymidylate kinase (215 aa).

12–19 (GIDGAGKS) lines the ATP pocket.

Belongs to the thymidylate kinase family.

The enzyme catalyses dTMP + ATP = dTDP + ADP. Functionally, phosphorylation of dTMP to form dTDP in both de novo and salvage pathways of dTTP synthesis. The chain is Thymidylate kinase from Albidiferax ferrireducens (strain ATCC BAA-621 / DSM 15236 / T118) (Rhodoferax ferrireducens).